Reading from the N-terminus, the 871-residue chain is Bifunctional cordycepin biosynthesis cluster protein 3 (871 aa).

Its pathway is secondary metabolite biosynthesis. In terms of biological role, nucleoside/nucleotide kinase; part of the gene cluster that mediates the biosynthesis of cordycepin (COR) and pentostatin (PTN), two adenosine analogs with related bioactivity profiles as both mimic adenosine and can inhibit some of the processes that are adenosine dependent. Within the pathway, cns3 catalyzes both the first step of cordycepin biosynthesis by phosphorylating adenosine into 3'-AMP via its kinase activity and the conversion of adenosine into pentostatin via its ATP phosphoribosyltransferase activity. The first step of cordycepin biosynthesis involves hydroxyl phosphorylation of the 3'-OH position on adenosine to produce adenosine-3'-monophosphate (3'-AMP), catalyzed by kinase activity of cns3. Next, 3'-AMP is dephosphorylated to 2'-carbonyl-3'-deoxyadenosine (2'-C-3'-dA) by cns2, which is finally converted to cordycepin (3'-deoxyadenosine) by the oxidoreductase cns1. The polypeptide is Bifunctional cordycepin biosynthesis cluster protein 3 (Cordyceps militaris (strain CM01) (Caterpillar fungus)).